Consider the following 307-residue polypeptide: Nitric oxide synthase-interacting protein homolog (307 aa).

Residues 120–159 (PAMTPAHSSAAASEKPSTSSAAAAASSESSSASSISNMTN) are disordered. Low complexity predominate over residues 127–155 (SSAAASEKPSTSSAAAAASSESSSASSIS).

Belongs to the NOSIP family.

It is found in the cytoplasm. The protein localises to the nucleus. Functionally, negatively regulates nitric oxide production by inducing nitric oxide synthase translocation to actin cytoskeleton and inhibiting its enzymatic activity. This Drosophila melanogaster (Fruit fly) protein is Nitric oxide synthase-interacting protein homolog.